Consider the following 250-residue polypeptide: Imidazole glycerol phosphate synthase subunit HisF (250 aa).

Catalysis depends on residues D11 and D130.

This sequence belongs to the HisA/HisF family. Heterodimer of HisH and HisF.

It localises to the cytoplasm. It carries out the reaction 5-[(5-phospho-1-deoxy-D-ribulos-1-ylimino)methylamino]-1-(5-phospho-beta-D-ribosyl)imidazole-4-carboxamide + L-glutamine = D-erythro-1-(imidazol-4-yl)glycerol 3-phosphate + 5-amino-1-(5-phospho-beta-D-ribosyl)imidazole-4-carboxamide + L-glutamate + H(+). It participates in amino-acid biosynthesis; L-histidine biosynthesis; L-histidine from 5-phospho-alpha-D-ribose 1-diphosphate: step 5/9. In terms of biological role, IGPS catalyzes the conversion of PRFAR and glutamine to IGP, AICAR and glutamate. The HisF subunit catalyzes the cyclization activity that produces IGP and AICAR from PRFAR using the ammonia provided by the HisH subunit. This chain is Imidazole glycerol phosphate synthase subunit HisF, found in Elusimicrobium minutum (strain Pei191).